We begin with the raw amino-acid sequence, 171 residues long: Endoribonuclease ToxN (171 aa).

It belongs to the ToxN/AbiQ toxin family. One ToxN monomer binds to a 36-nt-long single repeat of the ToxI RNA; this complex forms a triangular heterohexameric complex with ToxN connected by the ToxI RNA to another toxin molecule. The ToxI repeat forms a pseudoknot which occludes the toxin active site. Interaction of ToxI with ToxN partially inhibits the latter's endoribonuclease activity in vitro. The complex self-assembles in vitro with either full-length or processed single repeats; during the process the precursor is processed.

Functionally, toxic component of a type III toxin-antitoxin (TA) system. An endoribonuclease which is active independently of the ribosome, cleaving between the second and third A of AAA(U/G) sequences, although not all occurrences of this tetranucleotide are cleaved. Digests many mRNA species, including its own transcript and its cognate antitoxin RNA ToxI. ToxI has 5.5 nearly identical 36 nucleotide-long repeats (a single repeat neutralizes the toxin in vivo); a single repeat folds into a pseudoknot which binds the toxin. The ToxI precursor RNA is a preferential target in vivo and is progressively degraded to single repeat lengths as ToxN-ToxI complex self-assembly occurs. In vivo expression of ToxI antitoxin inhibits endonuclease activity of ToxN. The toxin alone inhibits growth when expressed in E.coli without causing cell lysis; this bacteriostatic effect is neutralized by cognate RNA antitoxin ToxI. Non-cognate antitoxin RNA from B.thuringiensis does not inhibit this toxin. The RNA antitoxin is less stable than the proteinaceous toxin; synthesis of ToxI in the absence of new ToxN synthesis restores growth and also detectable accumulation of the ToxN protein. Negatively regulates its own operon in complex with ToxI. The toxin-antitoxin system functions in plasmid maintenance (a plasmid addiction system). The TA system protects P.atrosepticum strain 1043 against phage phiM1 and phiA2, E.coli against some but not all coliphages and S.marcescens against some bacteriophages, causing an abortive infection (Abi phenotype). Also protects P.atrosepticum strain 1043 against phage phiTE; phage that escape Abi and grow in this bacterium have evolved a pseudo-ToxI RNA by expanding a pre-existing sequence similar to the bona fide ToxI repeats. In Pectobacterium atrosepticum (Erwinia carotovora subsp. atroseptica), this protein is Endoribonuclease ToxN.